Consider the following 420-residue polypeptide: Tyrosine--tRNA ligase (420 aa).

Tyr33 provides a ligand contact to L-tyrosine. The 'HIGH' region signature appears at 38–47 (PTADSLHVGH). The L-tyrosine site is built by Tyr167 and Gln171. Residues 227-231 (KFGKT) carry the 'KMSKS' region motif. Lys230 is an ATP binding site. The region spanning 353 to 419 (LTVADLLVKV…GKRNYALVKV (67 aa)) is the S4 RNA-binding domain.

The protein belongs to the class-I aminoacyl-tRNA synthetase family. TyrS type 1 subfamily. Homodimer.

It localises to the cytoplasm. It catalyses the reaction tRNA(Tyr) + L-tyrosine + ATP = L-tyrosyl-tRNA(Tyr) + AMP + diphosphate + H(+). In terms of biological role, catalyzes the attachment of tyrosine to tRNA(Tyr) in a two-step reaction: tyrosine is first activated by ATP to form Tyr-AMP and then transferred to the acceptor end of tRNA(Tyr). The sequence is that of Tyrosine--tRNA ligase from Anaeromyxobacter dehalogenans (strain 2CP-C).